Here is a 383-residue protein sequence, read N- to C-terminus: 6-hydroxynicotinate 3-monooxygenase (383 aa).

An N-terminal signal peptide occupies residues 1 to 26 (MQGKPRIAVIGAGLGGTAGAALMARA). Residues G15, 34 to 35 (EQ), H47, R108, and L130 each bind FAD. The active-site Proton acceptor is H47. Y214 (proton acceptor) is an active-site residue. FAD contacts are provided by residues D293 and 306 to 307 (AA).

The protein belongs to the 6-hydroxynicotinate 3-monooxygenase family. As to quaternary structure, monomer. FAD serves as cofactor.

It carries out the reaction 6-hydroxynicotinate + NADH + O2 + 2 H(+) = 2,5-dihydroxypyridine + CO2 + NAD(+) + H2O. The protein operates within cofactor degradation; nicotinate degradation. Its activity is regulated as follows. Competitively inhibited by 6-hydroxynicotinaldehyde. Functionally, flavin-dependent monooxygenase (FMO) that catalyzes the decarboxylative hydroxylation of 6-hydroxynicotinic acid (6-HNA) to 2,5-dihydroxypyridine (2,5-DHP) with concomitant oxidation of NADH, a step in the aerobic nicotinate degradation pathway. Is also active on the non-natural substrate 5-chloro-6-hydroxynicotinate, and is much less efficient on the substrate analog 4-hydroxybenzoate. This Bordetella bronchiseptica (strain ATCC BAA-588 / NCTC 13252 / RB50) (Alcaligenes bronchisepticus) protein is 6-hydroxynicotinate 3-monooxygenase.